Consider the following 172-residue polypeptide: MKNIVLTGFMGSGKTTIGRLVAEKLNIDLVDTDSEIIKEFKLTIDQIFEIHGEKKFRECEKRVIERVSKLENVVISTGGGVVLDPENVNLLRKNGVIYFLYASPENILKRLKDDNTRPLLKNGDKLSNIIRLMNIRMPFYKNCDFEINTDILSPELAAEKIISIHMAKESKR.

Residue 11–16 (GSGKTT) coordinates ATP. Residue Thr-15 coordinates Mg(2+). Substrate contacts are provided by Asp-33, Arg-57, and Gly-79. Arg-117 contributes to the ATP binding site. Arg-136 contributes to the substrate binding site.

The protein belongs to the shikimate kinase family. As to quaternary structure, monomer. It depends on Mg(2+) as a cofactor.

The protein localises to the cytoplasm. The catalysed reaction is shikimate + ATP = 3-phosphoshikimate + ADP + H(+). It participates in metabolic intermediate biosynthesis; chorismate biosynthesis; chorismate from D-erythrose 4-phosphate and phosphoenolpyruvate: step 5/7. Functionally, catalyzes the specific phosphorylation of the 3-hydroxyl group of shikimic acid using ATP as a cosubstrate. The protein is Shikimate kinase of Caldicellulosiruptor saccharolyticus (strain ATCC 43494 / DSM 8903 / Tp8T 6331).